The following is a 365-amino-acid chain: UDP-N-acetylglucosamine--N-acetylmuramyl-(pentapeptide) pyrophosphoryl-undecaprenol N-acetylglucosamine transferase (365 aa).

Residues 19 to 21 (TGG), N131, R170, S201, I255, 274 to 279 (ALTVTE), and Q300 contribute to the UDP-N-acetyl-alpha-D-glucosamine site.

This sequence belongs to the glycosyltransferase 28 family. MurG subfamily.

Its subcellular location is the cell inner membrane. The enzyme catalyses di-trans,octa-cis-undecaprenyl diphospho-N-acetyl-alpha-D-muramoyl-L-alanyl-D-glutamyl-meso-2,6-diaminopimeloyl-D-alanyl-D-alanine + UDP-N-acetyl-alpha-D-glucosamine = di-trans,octa-cis-undecaprenyl diphospho-[N-acetyl-alpha-D-glucosaminyl-(1-&gt;4)]-N-acetyl-alpha-D-muramoyl-L-alanyl-D-glutamyl-meso-2,6-diaminopimeloyl-D-alanyl-D-alanine + UDP + H(+). It functions in the pathway cell wall biogenesis; peptidoglycan biosynthesis. Functionally, cell wall formation. Catalyzes the transfer of a GlcNAc subunit on undecaprenyl-pyrophosphoryl-MurNAc-pentapeptide (lipid intermediate I) to form undecaprenyl-pyrophosphoryl-MurNAc-(pentapeptide)GlcNAc (lipid intermediate II). This chain is UDP-N-acetylglucosamine--N-acetylmuramyl-(pentapeptide) pyrophosphoryl-undecaprenol N-acetylglucosamine transferase, found in Acinetobacter baumannii (strain ATCC 17978 / DSM 105126 / CIP 53.77 / LMG 1025 / NCDC KC755 / 5377).